Reading from the N-terminus, the 345-residue chain is Trans-enoyl reductase tndF (345 aa).

The segment at 1–26 (MAREHQAAILPQPGGPLSVGMRPTPK) is disordered. NADP(+) contacts are provided by residues 44 to 49 (CDYYQR), 168 to 171 (SSSV), 191 to 194 (SPEH), Tyr209, and 244 to 245 (LD).

Belongs to the zinc-containing alcohol dehydrogenase family.

It participates in secondary metabolite biosynthesis; terpenoid biosynthesis. Trans-enoyl reductase; part of the gene cluster that mediates the biosynthesis of talaronoid C, a fusicoccane diterpenoid with an unprecedented tricyclic 5/8/6 ring system. The first step in the pathway is performed by the fusicoccadiene synthase tndC that possesses both prenyl transferase and terpene cyclase activity, converting isopentenyl diphosphate and dimethylallyl diphosphate into geranylgeranyl diphosphate (GGDP) and further converting GGDP into talarodiene, a precursor for talaronoid C. The remaining enzymes from the cluster include the cytochrome P450 monooxygenase tndB, the aldehyde reductase tndE and the alcohol dehydrogenase tndF that are involved in the conversion of talarodiene into talaronoid C. This chain is Trans-enoyl reductase tndF, found in Aspergillus flavipes.